The following is a 353-amino-acid chain: Polyprenal reductase 2 (353 aa).

A run of 6 helical transmembrane segments spans residues Pro11–Ile31, Phe78–Phe98, Met175–Ala195, Pro234–Leu254, Tyr291–Glu308, and Trp313–Leu335.

Belongs to the steroid 5-alpha reductase family. Polyprenal reductase subfamily.

It is found in the cell membrane. The enzyme catalyses a di-trans,poly-cis-dolichal + NADP(+) = a di-trans,poly-cis-polyprenal + NADPH + H(+). Its pathway is protein modification; protein glycosylation. In terms of biological role, plays a key role in early steps of protein N-linked glycosylation by being involved in the conversion of polyprenol into dolichol. Acts as a polyprenal reductase that mediates the reduction of polyprenal into dolichal in a NADP-dependent mechanism. Dolichols are required for the synthesis of dolichol-linked monosaccharides and the oligosaccharide precursor used for N-glycosylation. The protein is Polyprenal reductase 2 of Oryza sativa subsp. indica (Rice).